A 284-amino-acid polypeptide reads, in one-letter code: Putative thiosulfate sulfurtransferase SseB (284 aa).

Rhodanese domains follow at residues 20–138 (AGDP…SIET) and 169–280 (GAGG…RPVG). Arg-183 contacts substrate. The active-site Cysteine persulfide intermediate is the Cys-241.

The enzyme catalyses thiosulfate + hydrogen cyanide = thiocyanate + sulfite + 2 H(+). This Mycobacterium tuberculosis (strain CDC 1551 / Oshkosh) protein is Putative thiosulfate sulfurtransferase SseB (sseB).